The primary structure comprises 262 residues: 3-methyl-2-oxobutanoate hydroxymethyltransferase (262 aa).

Mg(2+) contacts are provided by aspartate 42 and aspartate 81. Residues 42-43 (DS), aspartate 81, and lysine 110 contribute to the 3-methyl-2-oxobutanoate site. Glutamate 112 lines the Mg(2+) pocket. Residue glutamate 180 is the Proton acceptor of the active site.

This sequence belongs to the PanB family. Homodecamer; pentamer of dimers. Requires Mg(2+) as cofactor.

The protein localises to the cytoplasm. It catalyses the reaction 3-methyl-2-oxobutanoate + (6R)-5,10-methylene-5,6,7,8-tetrahydrofolate + H2O = 2-dehydropantoate + (6S)-5,6,7,8-tetrahydrofolate. It functions in the pathway cofactor biosynthesis; (R)-pantothenate biosynthesis; (R)-pantoate from 3-methyl-2-oxobutanoate: step 1/2. Functionally, catalyzes the reversible reaction in which hydroxymethyl group from 5,10-methylenetetrahydrofolate is transferred onto alpha-ketoisovalerate to form ketopantoate. This chain is 3-methyl-2-oxobutanoate hydroxymethyltransferase, found in Legionella pneumophila subsp. pneumophila (strain Philadelphia 1 / ATCC 33152 / DSM 7513).